The sequence spans 668 residues: Small ribosomal subunit protein mS81 (rPPR8) (668 aa).

The N-terminal 36 residues, 1 to 36 (MRYQQWRLMLLRSYHRSHLPYLSPCSQVTSISSRSF), are a transit peptide targeting the mitochondrion. 7 PPR repeats span residues 286–320 (DEKT…GYEV), 321–355 (EIET…SSSS), 396–430 (TDSL…GYVP), 431–465 (SGDM…GNNL), 466–496 (DDKA…MVGN), 502–537 (ADYS…QLKP), and 543–577 (KSLV…GFPP).

Belongs to the PPR family. P subfamily. As to quaternary structure, component of the mitochondrial ribosome small subunit.

It localises to the mitochondrion. The chain is Small ribosomal subunit protein mS81 (rPPR8) from Arabidopsis thaliana (Mouse-ear cress).